A 935-amino-acid chain; its full sequence is Progesterone receptor (935 aa).

A disordered region spans residues 1 to 50 (MTELKAKGPRAPHVAGSPSSPKVGSPLPCSQAAGPFPGSQTSDTLPEASA). The interval 1–164 (MTELKAKGPR…PATQRVLSPL (164 aa)) is AF3; mediates transcriptional activation. The modulating, Pro-Rich stretch occupies residues 1-568 (MTELKAKGPR…YSFESLPQKI (568 aa)). Ser-20 carries the phosphoserine modification. Residues 55–59 (LDGLL) carry the LXXL motif 1 motif. A disordered region spans residues 62-159 (RICQGQDPTD…DPPAAPATQR (98 aa)). Ser-81 carries the phosphoserine modification. Positions 115 to 119 (LDTLW) match the LXXL motif 2 motif. Ser-130 and Ser-162 each carry phosphoserine. The tract at residues 165–305 (MSRSGGKAGD…LATTVTDFIH (141 aa)) is mediates transcriptional transrepression. The short motif at 183 to 187 (KVLPR) is the Nuclear localization signal element. The tract at residues 185–252 (LPRGLSPSRQ…ALGGAAAGGG (68 aa)) is disordered. Residue Ser-190 is modified to Phosphoserine. The span at 191–203 (PSRQLLLPTSGSP) shows a compositional bias: polar residues. At Ser-213 the chain carries Phosphoserine. Positions 220–231 (EVEEEDGSESED) are enriched in acidic residues. Low complexity predominate over residues 232 to 246 (SAGPLLKGKPRALGG). At Ser-294 the chain carries Phosphoserine; by MAPK1. The disordered stretch occupies residues 331 to 365 (GGAGAASAFAPPRSSPSASSTPVPGGDFPDCAYAP). Over residues 335–356 (AASAFAPPRSSPSASSTPVPGG) the composition is skewed to low complexity. Ser-345 is modified (phosphoserine; by MAPK). Lys-388 participates in a covalent cross-link: Glycyl lysine isopeptide (Lys-Gly) (interchain with G-Cter in SUMO); alternate. Lys-388 participates in a covalent cross-link: Glycyl lysine isopeptide (Lys-Gly) (interchain with G-Cter in ubiquitin); alternate. Ser-400 is subject to Phosphoserine; by CDK2. Residues 415–452 (PDFPLGPPPSLPPRAPPPRPGEAAVTAAPASASVSSAS) form a disordered region. Residues 418-434 (PLGPPPSLPPRAPPPRP) show a composition bias toward pro residues. Low complexity predominate over residues 435 to 452 (GEAAVTAAPASASVSSAS). Positions 456-548 (STLECILYKA…VYPPYLNYLR (93 aa)) are AF1; mediates transcriptional activation. A Glycyl lysine isopeptide (Lys-Gly) (interchain with G-Cter in SUMO) cross-link involves residue Lys-533. 2 consecutive NR C4-type zinc fingers follow at residues 569-589 (CLIC…CGSC) and 605-629 (CAGR…LRKC). A DNA-binding region (nuclear receptor) is located at residues 569-641 (CLICGDEASG…AGMVLGGRKF (73 aa)). Ser-678 is subject to Phosphoserine. Residues 681–915 (QDIQLIPPLI…EFPEMMSEVI (235 aa)) form the NR LBD domain. Residues 689-935 (LINLLLSIEP…MVKPLLFHKK (247 aa)) form an AF2; mediates transcriptional activation region.

Belongs to the nuclear hormone receptor family. Interacts with SMARD1 and UNC45A. Interacts with CUEDC2; the interaction promotes ubiquitination, decreases sumoylation, and represses transcriptional activity. Interacts with PIAS3; the interaction promotes sumoylation of PR in a hormone-dependent manner, inhibits DNA-binding, and alters nuclear export. Interacts with SP1; the interaction requires ligand-induced phosphorylation on Ser-344 by ERK1/2-MAPK. Interacts with PRMT2. Interacts with NCOA2 and NCOA1. Interacts with KLF9. Interacts with GTF2B. Post-translationally, phosphorylated on multiple serine sites. Several of these sites are hormone-dependent. Phosphorylation on Ser-294 is highly hormone-dependent and modulates ubiquitination and sumoylation on Lys-388. Phosphorylation on Ser-345 requires induction by hormone. Basal phosphorylation on Ser-81, Ser-162, Ser-190 and Ser-400 is increased in response to progesterone and can be phosphorylated in vitro by the CDK2-A1 complex. Increased levels of phosphorylation on Ser-400 also in the presence of EGF, heregulin, IGF, PMA and FBS. Phosphorylation at this site by CDK2 is ligand-independent, and increases nuclear translocation and transcriptional activity. Phosphorylation at Ser-162 and Ser-294, but not at Ser-190, is impaired during the G(2)/M phase of the cell cycle. Phosphorylation on Ser-345 by ERK1/2 MAPK is required for interaction with SP1. In terms of processing, sumoylation is hormone-dependent and represses transcriptional activity. Sumoylation on all three sites is enhanced by PIAS3. Desumoylated by SENP1. Sumoylation on Lys-388, the main site of sumoylation, is repressed by ubiquitination on the same site, and modulated by phosphorylation at Ser-294. Ubiquitination is hormone-dependent and represses sumoylation on the same site. Promoted by MAPK-mediated phosphorylation on Ser-294. Post-translationally, palmitoylated by ZDHHC7 and ZDHHC21. Palmitoylation is required for plasma membrane targeting and for rapid intracellular signaling via ERK and AKT kinases and cAMP generation.

It localises to the nucleus. The protein resides in the cytoplasm. The steroid hormones and their receptors are involved in the regulation of eukaryotic gene expression and affect cellular proliferation and differentiation in target tissues. Transcriptional activator of several progesteron-dependent promoters in a variety of cell types. Involved in activation of SRC-dependent MAPK signaling on hormone stimulation. This Pithecia irrorata (Gray monk saki) protein is Progesterone receptor (PGR).